The following is a 534-amino-acid chain: Allene oxide synthase 1, chloroplastic (534 aa).

Disordered regions lie at residues 1–31 (MAST…SSYR) and 43–71 (EIPP…LPAQ). The transit peptide at 1–69 (MASTSLSLPS…SPPVKQAKLP (69 aa)) directs the protein to the chloroplast. Composition is skewed to low complexity over residues 17–31 (SHTS…SSYR) and 43–62 (EIPP…SSPP). K149, H180, and K184 together coordinate heme b. (13S)-hydroperoxy-(9Z,11E)-octadecadienoate-binding residues include N337 and K343. A (13S)-hydroperoxy-(9Z,11E,15Z)-octadecatrienoate-binding site is contributed by N337. Heme b is bound by residues K485 and C487.

Belongs to the cytochrome P450 family. It depends on heme b as a cofactor. Expressed in flowers. Detected in stems and roots, but not in leaves and fruits under non-inducing conditions.

It localises to the plastid. The protein resides in the chloroplast. It catalyses the reaction (13S)-hydroperoxy-(9Z,11E,15Z)-octadecatrienoate = (9Z,13S,15Z)-12,13-epoxyoctadeca-9,11,15-trienoate + H2O. It carries out the reaction (13S)-hydroperoxy-(9Z,11E)-octadecadienoate = (9Z,13S)-12,13-epoxyoctadeca-9,11-dienoate + H2O. Functionally, cytochrome P450 of the CYP74A subfamily involved in the biosynthesis of jasmonic acid from lipoxygenase-derived hydroperoxides of free fatty acids. Catalyzes the synthesis of unstable allene oxide, which is further converted spontaneously by hydrolysis or cyclization. Can use 13S-hydroperoxy-9(Z),11(E),15(Z)-octadecatrienoic acid (13-HPOT) and 13S-hydroperoxy-9(Z),11(E)-octadecadienoic acid (13-HPOD) as substrates. This Solanum lycopersicum (Tomato) protein is Allene oxide synthase 1, chloroplastic.